Reading from the N-terminus, the 77-residue chain is uncharacterized protein (77 aa).

A helical transmembrane segment spans residues 36–52 (FYQLILKVLSALLLLSV).

The protein resides in the membrane. This is an uncharacterized protein from Saccharomyces cerevisiae (strain ATCC 204508 / S288c) (Baker's yeast).